Here is a 255-residue protein sequence, read N- to C-terminus: Hydroxyacylglutathione hydrolase (255 aa).

Histidine 56, histidine 58, aspartate 60, histidine 61, histidine 114, aspartate 133, and histidine 171 together coordinate Zn(2+).

Belongs to the metallo-beta-lactamase superfamily. Glyoxalase II family. In terms of assembly, monomer. It depends on Zn(2+) as a cofactor.

The catalysed reaction is an S-(2-hydroxyacyl)glutathione + H2O = a 2-hydroxy carboxylate + glutathione + H(+). The protein operates within secondary metabolite metabolism; methylglyoxal degradation; (R)-lactate from methylglyoxal: step 2/2. Functionally, thiolesterase that catalyzes the hydrolysis of S-D-lactoyl-glutathione to form glutathione and D-lactic acid. In Bradyrhizobium sp. (strain BTAi1 / ATCC BAA-1182), this protein is Hydroxyacylglutathione hydrolase.